The primary structure comprises 326 residues: Prenyl transferase nodC (326 aa).

The chain crosses the membrane as a helical span at residues 8–28; sequence LAAVLFSALFSLGVILVHLPW. H95 provides a ligand contact to isopentenyl diphosphate. Residues D102 and D106 each contribute to the Mg(2+) site. R111 provides a ligand contact to dimethylallyl diphosphate. The N-linked (GlcNAc...) asparagine glycan is linked to N139. K195 is a binding site for dimethylallyl diphosphate. N210 carries an N-linked (GlcNAc...) asparagine glycan.

The protein belongs to the FPP/GGPP synthase family.

The protein localises to the membrane. It functions in the pathway secondary metabolite biosynthesis. Its function is as follows. Cytochrome P450 monooxygenase; part of the gene cluster that mediates the biosynthesis of the indole diterpenes nodulisporic acids (NA). Nodulisporic acid A (NAA) and its chemically modified derivatives are of particular significance because of their highly potent insecticidal activity against blood-feeding arthropods and lack of observable adverse effects on mammals, in particular the tremogenicity associated with the paspaline-derived IDTs is not observed. The geranylgeranyl diphosphate (GGPP) synthase ggs1, localized outside of the cluster, is proposed to catalyze the first step in nodulisporic acid biosynthesis via conversion of farnesyl pyrophosphate and isopentyl pyrophosphate into geranylgeranyl pyrophosphate (GGPP). Condensation of indole-3-glycerol phosphate with GGPP by the prenyl transferase nodC then forms 3-geranylgeranylindole (3-GGI). Epoxidation by the FAD-dependent monooxygenase nodM leads to a single-epoxidized-GGI that is substrate of the terpene cyclase nodB for cyclization to yield emindole SB. The terminal methyl carbon, C28, of emindole SB is then oxidized by the cytochrome P450 monooxygenase nodW to produce nodulisporic acid F (NAF), the pentacyclic core of NAA. NAF is converted to nodulisporic acid E (NAE) via prenylation. This step is probably performed by one of the indole diterpene prenyltransferases nodD1 or nodD2. Several oxidation steps performed by the FAD-linked oxidoreductase nodO and one of the cytochrome P450 monooxygenase nodR, nodX or nodZ further convert NAE to nodulisporic acid D (NAD). NAD is substrate of cytochrome P450 monooxygenase nodJ to produce the precursor of nodulisporic acid C (NAC), converted to NAC by one of the indole diterpene prenyltransferases nodD1 or nodD2. The FAD-dependent monooxygenase nodY2 then oxidizes NAC to nodulisporic acid B (NAB). Finally NAB is converted to NAA by one of the cytochrome P450 monooxygenases nodR, nodX or nodZ. The sequence is that of Prenyl transferase nodC from Hypoxylon pulicicidum.